Reading from the N-terminus, the 382-residue chain is Chaperone protein DnaJ (382 aa).

Residues 5 to 69 (DYYEILGVSK…EKRARYDRFG (65 aa)) enclose the J domain. The segment at 137–219 (GKETEIEIPR…CGGTGRVKRR (83 aa)) adopts a CR-type zinc-finger fold. Zn(2+) contacts are provided by Cys-150, Cys-153, Cys-167, Cys-170, Cys-193, Cys-196, Cys-207, and Cys-210. 4 CXXCXGXG motif repeats span residues 150–157 (CDTCQGSG), 167–174 (CPHCHGSG), 193–200 (CPVCGGTG), and 207–214 (CPTCGGTG). The tract at residues 154-175 (QGSGAKPGTSPTSCPHCHGSGQ) is disordered.

This sequence belongs to the DnaJ family. Homodimer. Zn(2+) is required as a cofactor.

It is found in the cytoplasm. Its function is as follows. Participates actively in the response to hyperosmotic and heat shock by preventing the aggregation of stress-denatured proteins and by disaggregating proteins, also in an autonomous, DnaK-independent fashion. Unfolded proteins bind initially to DnaJ; upon interaction with the DnaJ-bound protein, DnaK hydrolyzes its bound ATP, resulting in the formation of a stable complex. GrpE releases ADP from DnaK; ATP binding to DnaK triggers the release of the substrate protein, thus completing the reaction cycle. Several rounds of ATP-dependent interactions between DnaJ, DnaK and GrpE are required for fully efficient folding. Also involved, together with DnaK and GrpE, in the DNA replication of plasmids through activation of initiation proteins. The sequence is that of Chaperone protein DnaJ from Geobacillus kaustophilus (strain HTA426).